The chain runs to 366 residues: MSVIELFQKLLKFKSITPNDDGAFDFIQEYLGNEWNCIKVDMEGVKNRFYYKKFNDTKQHLCFAGHIDVVPVGNGWEVDPFAAEVIDGVITARGAQDMKSGDAAFLYACKNAKNFDGTLSILMTSDEEGEGTYGTIKMLEHLKQINMIPNYAVVAEPTCEEVFGDAIKVGRRGSINGYITIKGKQGHAAYPEKCINPVHNFAHILPKIAGINLDNGDEYFAPSKLVITDIRAGMEVTNVTPNELKIMFNVRNSTNTTKEDVENFINQNLKGLDYDFRITQGSFPFVTNKTSKVVIAMENSIYDILKIKTKHSTAGGTSDARYFGAFGIEAIEFGVINDTIHSINEKTTVKEVEGLTEVFENLIKNF.

Residue histidine 66 participates in Zn(2+) binding. Aspartate 68 is a catalytic residue. A Zn(2+)-binding site is contributed by aspartate 97. Glutamate 127 functions as the Proton acceptor in the catalytic mechanism. Positions 128, 156, and 341 each coordinate Zn(2+).

The protein belongs to the peptidase M20A family. DapE subfamily. Homodimer. The cofactor is Zn(2+). It depends on Co(2+) as a cofactor.

The enzyme catalyses N-succinyl-(2S,6S)-2,6-diaminopimelate + H2O = (2S,6S)-2,6-diaminopimelate + succinate. Its pathway is amino-acid biosynthesis; L-lysine biosynthesis via DAP pathway; LL-2,6-diaminopimelate from (S)-tetrahydrodipicolinate (succinylase route): step 3/3. In terms of biological role, catalyzes the hydrolysis of N-succinyl-L,L-diaminopimelic acid (SDAP), forming succinate and LL-2,6-diaminopimelate (DAP), an intermediate involved in the bacterial biosynthesis of lysine and meso-diaminopimelic acid, an essential component of bacterial cell walls. The sequence is that of Succinyl-diaminopimelate desuccinylase from Aliarcobacter butzleri (strain RM4018) (Arcobacter butzleri).